Consider the following 65-residue polypeptide: Non-structural protein 5a (65 aa).

This is Non-structural protein 5a from Avian infectious bronchitis virus (strain Beaudette) (IBV).